The sequence spans 57 residues: Large ribosomal subunit protein bL33 (57 aa).

This sequence belongs to the bacterial ribosomal protein bL33 family.

The sequence is that of Large ribosomal subunit protein bL33 from Shewanella sp. (strain MR-4).